Reading from the N-terminus, the 438-residue chain is Transposon Ty2-GR1 Gag polyprotein (438 aa).

Polar residues-rich tracts occupy residues 1–11 (MESQQLHQNPH), 19–39 (ASVTSKEVPSNQDPLAVSASN), and 49–60 (KVNSQQETTPGT). Disordered regions lie at residues 1-86 (MESQ…GQYQ), 360-403 (HSEY…ATSS), and 418-438 (VSSQYLSDDDELSLRPATERI). Residues 295-397 (ENNINVSDRL…SSKPRAAKAH (103 aa)) form an RNA-binding region. Residues 369 to 381 (TSPNTTNTKVTTR) show a composition bias toward low complexity.

In terms of assembly, homotrimer.

The protein resides in the cytoplasm. In terms of biological role, capsid protein (CA) is the structural component of the virus-like particle (VLP), forming the shell that encapsulates the retrotransposons dimeric RNA genome. The particles are assembled from trimer-clustered units and there are holes in the capsid shells that allow for the diffusion of macromolecules. CA also has nucleocapsid-like chaperone activity, promoting primer tRNA(i)-Met annealing to the multipartite primer-binding site (PBS), dimerization of Ty2 RNA and initiation of reverse transcription. The chain is Transposon Ty2-GR1 Gag polyprotein (TY2A-GR1) from Saccharomyces cerevisiae (strain ATCC 204508 / S288c) (Baker's yeast).